The following is a 262-amino-acid chain: Phosphonates import ATP-binding protein PhnC (262 aa).

The 249-residue stretch at 5–253 (IRVEKLAKTF…RFDHLYRSIN (249 aa)) folds into the ABC transporter domain. ATP is bound at residue 37-44 (GPSGSGKS).

It belongs to the ABC transporter superfamily. Phosphonates importer (TC 3.A.1.9.1) family. In terms of assembly, the complex is composed of two ATP-binding proteins (PhnC), two transmembrane proteins (PhnE) and a solute-binding protein (PhnD).

It is found in the cell inner membrane. It catalyses the reaction phosphonate(out) + ATP + H2O = phosphonate(in) + ADP + phosphate + H(+). In terms of biological role, part of the ABC transporter complex PhnCDE involved in phosphonates import. Responsible for energy coupling to the transport system. In Escherichia coli O6:K15:H31 (strain 536 / UPEC), this protein is Phosphonates import ATP-binding protein PhnC.